The sequence spans 354 residues: Peptide chain release factor 1 (354 aa).

Gln232 carries the post-translational modification N5-methylglutamine.

Belongs to the prokaryotic/mitochondrial release factor family. Methylated by PrmC. Methylation increases the termination efficiency of RF1.

The protein resides in the cytoplasm. In terms of biological role, peptide chain release factor 1 directs the termination of translation in response to the peptide chain termination codons UAG and UAA. The sequence is that of Peptide chain release factor 1 from Phytoplasma australiense.